Reading from the N-terminus, the 261-residue chain is Phosphoinositide-3-kinase-interacting protein 1 (261 aa).

Positions methionine 1–glycine 21 are cleaved as a signal peptide. Topologically, residues serine 22–threonine 166 are extracellular. Residues glycine 24–cysteine 101 form the Kringle domain. 3 cysteine pairs are disulfide-bonded: cysteine 25/cysteine 101, cysteine 46/cysteine 82, and cysteine 70/cysteine 96. Residues alanine 90–cysteine 101 are compositionally biased toward basic and acidic residues. Residues alanine 90–valine 122 form a disordered region. Residues leucine 167–valine 187 form a helical membrane-spanning segment. Residues leucine 188–alanine 261 are Cytoplasmic-facing.

Its subcellular location is the cell membrane. Its function is as follows. Negative regulator of hepatic phosphatidylinositol 3-kinase (PI3K) activity. This Bos taurus (Bovine) protein is Phosphoinositide-3-kinase-interacting protein 1 (PIK3IP1).